Consider the following 570-residue polypeptide: Periplasmic trehalase (570 aa).

The signal sequence occupies residues Met-1–Ala-34. Substrate contacts are provided by residues Arg-159, Trp-166–Asp-167, Asn-203, Arg-212–Gln-214, Arg-284–Glu-286, and Gly-317. Active-site proton donor/acceptor residues include Asp-319 and Glu-503. Position 518 (Glu-518) interacts with substrate. The interval Lys-544–Gln-570 is disordered. Residues Pro-554 to Gln-570 are compositionally biased toward low complexity.

The protein belongs to the glycosyl hydrolase 37 family. As to quaternary structure, monomer.

It is found in the periplasm. It catalyses the reaction alpha,alpha-trehalose + H2O = alpha-D-glucose + beta-D-glucose. Provides the cells with the ability to utilize trehalose at high osmolarity by splitting it into glucose molecules that can subsequently be taken up by the phosphotransferase-mediated uptake system. The polypeptide is Periplasmic trehalase (Salmonella dublin (strain CT_02021853)).